Consider the following 288-residue polypeptide: Sulfur carrier protein FdhD (288 aa).

Cys-122 (cysteine persulfide intermediate) is an active-site residue. 268–273 (FVRGER) provides a ligand contact to Mo-bis(molybdopterin guanine dinucleotide).

Belongs to the FdhD family.

The protein localises to the cytoplasm. Functionally, required for formate dehydrogenase (FDH) activity. Acts as a sulfur carrier protein that transfers sulfur from IscS to the molybdenum cofactor prior to its insertion into FDH. In Anaeromyxobacter dehalogenans (strain 2CP-1 / ATCC BAA-258), this protein is Sulfur carrier protein FdhD.